The primary structure comprises 858 residues: DNA mismatch repair protein MutS (858 aa).

613 to 620 is an ATP binding site; that stretch reads GPNMAGKS.

Belongs to the DNA mismatch repair MutS family.

This protein is involved in the repair of mismatches in DNA. It is possible that it carries out the mismatch recognition step. This protein has a weak ATPase activity. This chain is DNA mismatch repair protein MutS, found in Dehalococcoides mccartyi (strain ATCC BAA-2266 / KCTC 15142 / 195) (Dehalococcoides ethenogenes (strain 195)).